A 539-amino-acid chain; its full sequence is Prolyl 4-hydroxylase subunit alpha-2 (539 aa).

A signal peptide spans 1 to 16 (MRAVLLVCLLAGLAHA). Asparagine 110 carries N-linked (GlcNAc...) asparagine glycosylation. Residues 401 to 509 (TSEELQVANY…KWVSNKWIHE (109 aa)) enclose the Fe2OG dioxygenase domain. Fe cation contacts are provided by histidine 419, aspartate 421, and histidine 490. Lysine 500 lines the 2-oxoglutarate pocket.

Belongs to the P4HA family. In terms of assembly, heterotetramer of two alpha chains and two beta chains. Exist either as a phy-2(2)/pdi-2(2) tetramer or as a phy-1/phy-2/pdi-2(2) tetramer. Requires Fe(2+) as cofactor. L-ascorbate serves as cofactor.

It localises to the endoplasmic reticulum lumen. It catalyses the reaction L-prolyl-[collagen] + 2-oxoglutarate + O2 = trans-4-hydroxy-L-prolyl-[collagen] + succinate + CO2. In terms of biological role, catalyzes the post-translational formation of 4-hydroxyproline in -Xaa-Pro-Gly- sequences in collagens and other proteins. In Caenorhabditis elegans, this protein is Prolyl 4-hydroxylase subunit alpha-2 (phy-2).